The primary structure comprises 394 residues: Actin-related protein 2 (394 aa).

Position 1 is an N-acetylmethionine (methionine 1). ATP contacts are provided by residues 160 to 162 (GDG) and 214 to 218 (RMIKE). Position 299 is an N6-acetyllysine (lysine 299). 305-310 (GGSTMY) is a binding site for ATP. The residue at position 322 (lysine 322) is an N6-acetyllysine.

Belongs to the actin family. ARP2 subfamily. As to quaternary structure, component of the Arp2/3 complex composed of ACTR2/ARP2, ACTR3/ARP3, ARPC1B/p41-ARC, ARPC2/p34-ARC, ARPC3/p21-ARC, ARPC4/p20-ARC and ARPC5/p16-ARC. Interacts with AVIL.

The protein localises to the cytoplasm. Its subcellular location is the cytoskeleton. It is found in the cell projection. The protein resides in the nucleus. Functionally, ATP-binding component of the Arp2/3 complex, a multiprotein complex that mediates actin polymerization upon stimulation by nucleation-promoting factor (NPF). The Arp2/3 complex mediates the formation of branched actin networks in the cytoplasm, providing the force for cell motility. Seems to contact the pointed end of the daughter actin filament. In podocytes, required for the formation of lamellipodia downstream of AVIL and PLCE1 regulation. In addition to its role in the cytoplasmic cytoskeleton, the Arp2/3 complex also promotes actin polymerization in the nucleus, thereby regulating gene transcription and repair of damaged DNA. The Arp2/3 complex promotes homologous recombination (HR) repair in response to DNA damage by promoting nuclear actin polymerization, leading to drive motility of double-strand breaks (DSBs). The protein is Actin-related protein 2 (ACTR2) of Bos taurus (Bovine).